Here is a 312-residue protein sequence, read N- to C-terminus: Copper chaperone for superoxide dismutase, chloroplastic (312 aa).

The transit peptide at Met-1–Ser-78 directs the protein to the chloroplast. The HMA domain occupies Glu-89 to Arg-152. The Cu cation site is built by Cys-100, Cys-103, Cys-301, and Cys-303.

The protein in the C-terminal section; belongs to the Cu-Zn superoxide dismutase family. It depends on Cu(2+) as a cofactor.

Its subcellular location is the plastid. It is found in the chloroplast. Its function is as follows. Copper chaperone for superoxide dismutases (SODs). Binds copper ions and delivers them specifically to SODs. Is required for assistance in SODs disulfide bond formation and thereby activation of SODs. The chain is Copper chaperone for superoxide dismutase, chloroplastic (CCS) from Oryza sativa subsp. japonica (Rice).